Consider the following 475-residue polypeptide: Sulfate adenylyltransferase subunit 1 (475 aa).

Residues 25 to 239 enclose the tr-type G domain; that stretch reads KSLLRFLTCG…EVLETVEIQR (215 aa). Residues 34-41 form a G1 region; the sequence is GSVDDGKS. 34–41 is a GTP binding site; sequence GSVDDGKS. The tract at residues 92 to 96 is G2; that stretch reads GITID. The segment at 113 to 116 is G3; sequence DTPG. Residues 113–117 and 168–171 contribute to the GTP site; these read DTPGH and NKMD. Residues 168 to 171 are G4; it reads NKMD. A G5 region spans residues 206–208; that stretch reads SAL.

This sequence belongs to the TRAFAC class translation factor GTPase superfamily. Classic translation factor GTPase family. CysN/NodQ subfamily. Heterodimer composed of CysD, the smaller subunit, and CysN.

It carries out the reaction sulfate + ATP + H(+) = adenosine 5'-phosphosulfate + diphosphate. It functions in the pathway sulfur metabolism; hydrogen sulfide biosynthesis; sulfite from sulfate: step 1/3. In terms of biological role, with CysD forms the ATP sulfurylase (ATPS) that catalyzes the adenylation of sulfate producing adenosine 5'-phosphosulfate (APS) and diphosphate, the first enzymatic step in sulfur assimilation pathway. APS synthesis involves the formation of a high-energy phosphoric-sulfuric acid anhydride bond driven by GTP hydrolysis by CysN coupled to ATP hydrolysis by CysD. This Escherichia coli (strain ATCC 8739 / DSM 1576 / NBRC 3972 / NCIMB 8545 / WDCM 00012 / Crooks) protein is Sulfate adenylyltransferase subunit 1.